A 217-amino-acid chain; its full sequence is Cytidylate kinase (217 aa).

10-18 (GPAGAGKST) contacts ATP.

It belongs to the cytidylate kinase family. Type 1 subfamily.

It localises to the cytoplasm. It catalyses the reaction CMP + ATP = CDP + ADP. The enzyme catalyses dCMP + ATP = dCDP + ADP. This Alkaliphilus oremlandii (strain OhILAs) (Clostridium oremlandii (strain OhILAs)) protein is Cytidylate kinase.